An 835-amino-acid chain; its full sequence is Leucine--tRNA ligase (835 aa).

Positions 44 to 54 (PYPSGNIHMGH) match the 'HIGH' region motif. The 'KMSKS' region motif lies at 587-591 (KMSKS). Lys-590 is a binding site for ATP.

The protein belongs to the class-I aminoacyl-tRNA synthetase family.

The protein resides in the cytoplasm. The enzyme catalyses tRNA(Leu) + L-leucine + ATP = L-leucyl-tRNA(Leu) + AMP + diphosphate. This Lawsonia intracellularis (strain PHE/MN1-00) protein is Leucine--tRNA ligase.